The sequence spans 1380 residues: MAYSFTEKKRIRKDFGKLPKVMEVPYLLAIQLDSYRKFLQQDKSAEERLEEGLEAAFRSVFPIASYSGNAALEYAGYEFGKPVFDVKECIIRGTTYAAPLRVRIRLVIYDRESSGAIKDIREQQVYMGEIPLMTENGTFVINGTERVIVSQLHRSPGVFFDHDKGKTHSSGKLLYSARVIPYRGSWLDFEFDPKDQVFVRIDRRRKLPATILLRALGYTSDEVLEMFFDTNEIAVEDGIYRMKLVPERLRGETATFDILADGEVVVERGRRITARHIRQLEKANIEYLDIPAEYLQGKYLAKSIIDQDTGEILVECNTELTAETLEKLEQGGITDFETLYTNDLDNGPFMADTLRADPTRTPLEALVEIYRMMRPGEPPTKEAAENLFKNLFFTDERYDLSTVGRMKFNRRLGREDETGPGILYDGRYFSARSDEEGKQYFEQMGGETSDIIDVLRTLVDIRNGNGVVDDIDHLGNRRVRSVGEMAENQFRVGLVRVERAVKERLSLAESEGLMPQDLINSKPVAAAVKEFFGSSQLSQFMDQNNPLSEITHKRRVSALGPGGLTRERAGFEVRDVHPTHYGRVCPIETPEGPNIGLINSLATYARANEYGFLESPYLKVIDGKVSEEIEYLSAIEEAECVIAQVDAKMTEEGGFEEDFVTVRHRYEFTVMERDTITHMDVSPRQVVSVAASLIPFLEHDDANRALMGSNMQRQAVPTLRADKPLVGTGFERHVARDSGVCVVATRGGIVDKVDASRIIVKVNDDEVSEGEAGVDIYNLTKYTRSNQNTCINQRPLVKVGDRVAARDIMADGPSVDMGELALGQNMRVAFMPWNGYNFEDSILISEKVVKDDRFTSIHIQELTCIARDTKLGPEEITADIPNVGEAALSKLDESGIVYIGAEVEAGDILVGKVTPKGETQLTPEEKLLRAIFGEKASDVKDTSQRVSSGVKGTIIDVQVFTRDGVEKDERARQIEQAALEQFRKDLKDEYRILELDILERLRAVMVGKKVNGGAGFKRGTEMTGEILDGLDAEKWFELRPADDDVAEQLERAQQYLEQHKKEQDERYKDKQAKISGGDDLAHGVLKVVKVYLAIKRRIQPGDKMAGRHGNKGVISVIMPEEDMPHDENGVPVDVVLNPLGVPSRMNVGQILETHLGWAAKGLGERIGEMLAEQKKIADIRVFLDKIYNQAGAGGTPEDLDSFSDDEIIELAKNLVGGVPMATAVFDGAKEFEIKELLELAGHDRSGQVQLWDGRTGEAFDRKVTVGYMYMLKLNHLVDDKMHARSTGSYSLVTQQPLGGKAQFGGQRFGEMEVWALEAYGAAYTLQEMLTVKSDDVNGRTRVYKNIVDGDHRMDPGMPESFNVLLKEIRSLGINIELEND.

This sequence belongs to the RNA polymerase beta chain family. In terms of assembly, the RNAP catalytic core consists of 2 alpha, 1 beta, 1 beta' and 1 omega subunit. When a sigma factor is associated with the core the holoenzyme is formed, which can initiate transcription.

It catalyses the reaction RNA(n) + a ribonucleoside 5'-triphosphate = RNA(n+1) + diphosphate. Its function is as follows. DNA-dependent RNA polymerase catalyzes the transcription of DNA into RNA using the four ribonucleoside triphosphates as substrates. The protein is DNA-directed RNA polymerase subunit beta of Alcanivorax borkumensis (strain ATCC 700651 / DSM 11573 / NCIMB 13689 / SK2).